The chain runs to 390 residues: Chorismate synthase 1 (390 aa).

The NADP(+) site is built by arginine 39 and arginine 45. FMN-binding positions include 132–134 (RSS), 253–254 (NA), glycine 298, 313–317 (KPIPT), and arginine 339.

The protein belongs to the chorismate synthase family. Homotetramer. FMNH2 serves as cofactor.

The catalysed reaction is 5-O-(1-carboxyvinyl)-3-phosphoshikimate = chorismate + phosphate. Its pathway is metabolic intermediate biosynthesis; chorismate biosynthesis; chorismate from D-erythrose 4-phosphate and phosphoenolpyruvate: step 7/7. In terms of biological role, catalyzes the anti-1,4-elimination of the C-3 phosphate and the C-6 proR hydrogen from 5-enolpyruvylshikimate-3-phosphate (EPSP) to yield chorismate, which is the branch point compound that serves as the starting substrate for the three terminal pathways of aromatic amino acid biosynthesis. This reaction introduces a second double bond into the aromatic ring system. In Bacillus anthracis, this protein is Chorismate synthase 1.